The following is a 473-amino-acid chain: 3-isopropylmalate dehydratase large subunit (473 aa).

Residues C351, C414, and C417 each coordinate [4Fe-4S] cluster.

The protein belongs to the aconitase/IPM isomerase family. LeuC type 1 subfamily. Heterodimer of LeuC and LeuD. Requires [4Fe-4S] cluster as cofactor.

It carries out the reaction (2R,3S)-3-isopropylmalate = (2S)-2-isopropylmalate. It functions in the pathway amino-acid biosynthesis; L-leucine biosynthesis; L-leucine from 3-methyl-2-oxobutanoate: step 2/4. Its function is as follows. Catalyzes the isomerization between 2-isopropylmalate and 3-isopropylmalate, via the formation of 2-isopropylmaleate. In Polaromonas sp. (strain JS666 / ATCC BAA-500), this protein is 3-isopropylmalate dehydratase large subunit.